Here is a 65-residue protein sequence, read N- to C-terminus: Large ribosomal subunit protein bL35 (65 aa).

2 disordered regions span residues 1–23 and 29–48; these read MPKIKTNRAAAKRFKKTGSGKVK and GSHILAKKSRKRKRDLRQSH. Over residues 33–43 the composition is skewed to basic residues; it reads LAKKSRKRKRD.

It belongs to the bacterial ribosomal protein bL35 family.

The protein is Large ribosomal subunit protein bL35 of Desulfatibacillum aliphaticivorans.